Here is a 150-residue protein sequence, read N- to C-terminus: D-aminoacyl-tRNA deacylase (150 aa).

A Gly-cisPro motif, important for rejection of L-amino acids motif is present at residues 136 to 137 (GP).

The protein belongs to the DTD family. As to quaternary structure, homodimer.

It localises to the cytoplasm. It carries out the reaction glycyl-tRNA(Ala) + H2O = tRNA(Ala) + glycine + H(+). It catalyses the reaction a D-aminoacyl-tRNA + H2O = a tRNA + a D-alpha-amino acid + H(+). In terms of biological role, an aminoacyl-tRNA editing enzyme that deacylates mischarged D-aminoacyl-tRNAs. Also deacylates mischarged glycyl-tRNA(Ala), protecting cells against glycine mischarging by AlaRS. Acts via tRNA-based rather than protein-based catalysis; rejects L-amino acids rather than detecting D-amino acids in the active site. By recycling D-aminoacyl-tRNA to D-amino acids and free tRNA molecules, this enzyme counteracts the toxicity associated with the formation of D-aminoacyl-tRNA entities in vivo and helps enforce protein L-homochirality. In Staphylococcus epidermidis (strain ATCC 35984 / DSM 28319 / BCRC 17069 / CCUG 31568 / BM 3577 / RP62A), this protein is D-aminoacyl-tRNA deacylase.